We begin with the raw amino-acid sequence, 123 residues long: Small ribosomal subunit protein uS12 (123 aa).

The disordered stretch occupies residues 1 to 28 (MPTIQQLIRKPRQPKVKRSKSQHLEQCP). Positions 9–21 (RKPRQPKVKRSKS) are enriched in basic residues. The residue at position 89 (Asp-89) is a 3-methylthioaspartic acid.

The protein belongs to the universal ribosomal protein uS12 family. In terms of assembly, part of the 30S ribosomal subunit. Contacts proteins S8 and S17. May interact with IF1 in the 30S initiation complex.

Its function is as follows. With S4 and S5 plays an important role in translational accuracy. Interacts with and stabilizes bases of the 16S rRNA that are involved in tRNA selection in the A site and with the mRNA backbone. Located at the interface of the 30S and 50S subunits, it traverses the body of the 30S subunit contacting proteins on the other side and probably holding the rRNA structure together. The combined cluster of proteins S8, S12 and S17 appears to hold together the shoulder and platform of the 30S subunit. In Ruegeria pomeroyi (strain ATCC 700808 / DSM 15171 / DSS-3) (Silicibacter pomeroyi), this protein is Small ribosomal subunit protein uS12.